A 454-amino-acid polypeptide reads, in one-letter code: Uridine kinase (454 aa).

Residue G28 to T35 coordinates ATP.

The protein belongs to the uridine kinase family.

The protein resides in the cytoplasm. It is found in the nucleus. The catalysed reaction is uridine + ATP = UMP + ADP + H(+). It catalyses the reaction cytidine + ATP = CMP + ADP + H(+). It functions in the pathway pyrimidine metabolism; CTP biosynthesis via salvage pathway; CTP from cytidine: step 1/3. The protein operates within pyrimidine metabolism; UMP biosynthesis via salvage pathway; UMP from uridine: step 1/1. In terms of biological role, catalyzes the conversion of uridine into UMP and cytidine into CMP in the pyrimidine salvage pathway. The polypeptide is Uridine kinase (urk1) (Schizosaccharomyces pombe (strain 972 / ATCC 24843) (Fission yeast)).